Reading from the N-terminus, the 295-residue chain is Tyrosine recombinase XerD (295 aa).

The Core-binding (CB) domain occupies 1 to 85 (MDTIIEEYLK…TIRSFHQFAL (85 aa)). Residues 106–289 (KLPDVLEINE…SKSQIRKMYN (184 aa)) enclose the Tyr recombinase domain. Residues Arg-146, Lys-170, His-241, Arg-244, and His-267 contribute to the active site. The active-site O-(3'-phospho-DNA)-tyrosine intermediate is Tyr-276.

This sequence belongs to the 'phage' integrase family. XerD subfamily. Forms a cyclic heterotetrameric complex composed of two molecules of XerC and two molecules of XerD.

It localises to the cytoplasm. Its function is as follows. Site-specific tyrosine recombinase, which acts by catalyzing the cutting and rejoining of the recombining DNA molecules. The XerC-XerD complex is essential to convert dimers of the bacterial chromosome into monomers to permit their segregation at cell division. It also contributes to the segregational stability of plasmids. This chain is Tyrosine recombinase XerD, found in Staphylococcus saprophyticus subsp. saprophyticus (strain ATCC 15305 / DSM 20229 / NCIMB 8711 / NCTC 7292 / S-41).